A 108-amino-acid chain; its full sequence is Ig kappa chain V-V region NQ5-89.4 (108 aa).

The interval 1 to 23 (DIQMTQTTSSLSASLGHRVTITC) is framework-1. Cysteine 23 and cysteine 88 form a disulfide bridge. Residues 24 to 34 (SASQDISNYLN) form a complementarity-determining-1 region. Positions 35 to 49 (WYQQKPDGTVKLLIY) are framework-2. Residues 50–56 (YTSRLHS) form a complementarity-determining-2 region. Residues 57-88 (GVPSRFSGSGSATDYSLTITNLQQEDXATYXC) form a framework-3 region. The tract at residues 89–97 (QQGNTLPYT) is complementarity-determining-3. Positions 98–107 (FGGGTKLXIK) are framework-4.

In terms of biological role, anti-2-phenyl oxazolone (PHOX) Antibody. This Mus musculus (Mouse) protein is Ig kappa chain V-V region NQ5-89.4.